The primary structure comprises 340 residues: Coproporphyrin III ferrochelatase (340 aa).

2 residues coordinate Fe-coproporphyrin III: Ser52 and Tyr121. His181 and Glu264 together coordinate Fe(2+).

Belongs to the ferrochelatase family.

It localises to the cytoplasm. The catalysed reaction is Fe-coproporphyrin III + 2 H(+) = coproporphyrin III + Fe(2+). It participates in porphyrin-containing compound metabolism; protoheme biosynthesis. Functionally, involved in coproporphyrin-dependent heme b biosynthesis. Catalyzes the insertion of ferrous iron into coproporphyrin III to form Fe-coproporphyrin III. In Mycolicibacterium smegmatis (strain ATCC 700084 / mc(2)155) (Mycobacterium smegmatis), this protein is Coproporphyrin III ferrochelatase.